The primary structure comprises 522 residues: Glucans biosynthesis protein G (522 aa).

The N-terminal stretch at 1-33 (MLDNKFGFKQRVASLRWLSAAIMLSVSAVPAWA) is a signal peptide.

The protein belongs to the OpgD/OpgG family.

The protein localises to the periplasm. The protein operates within glycan metabolism; osmoregulated periplasmic glucan (OPG) biosynthesis. Functionally, involved in the biosynthesis of osmoregulated periplasmic glucans (OPGs). This chain is Glucans biosynthesis protein G, found in Pectobacterium carotovorum subsp. carotovorum (strain PC1).